We begin with the raw amino-acid sequence, 350 residues long: Neutral protease 2 homolog SNOG_10522 (350 aa).

A signal peptide spans 1-18 (MKVSSQLAVAALASFATA). Positions 19–180 (ASVDVHKRET…AKALNKRTAI (162 aa)) are excised as a propeptide. 2 disulfides stabilise this stretch: C184–C251 and C258–C276. H301 is a Zn(2+) binding site. E302 is a catalytic residue. Zn(2+) is bound by residues H305 and D316.

Belongs to the peptidase M35 family. Zn(2+) serves as cofactor.

Its subcellular location is the secreted. It carries out the reaction Preferential cleavage of bonds with hydrophobic residues in P1'. Also 3-Asn-|-Gln-4 and 8-Gly-|-Ser-9 bonds in insulin B chain.. Secreted metalloproteinase that allows assimilation of proteinaceous substrates. Shows high activities on basic nuclear substrates such as histone and protamine. The chain is Neutral protease 2 homolog SNOG_10522 from Phaeosphaeria nodorum (strain SN15 / ATCC MYA-4574 / FGSC 10173) (Glume blotch fungus).